The primary structure comprises 365 residues: Regulatory protein RapG (365 aa).

TPR repeat units lie at residues 135–168 (GKLYYKLGQNIVSLNHTRQAVKTFREETDYKKKL), 169–202 (ASALITMSGNFTEMSQFEEAEAYLDEAIRITSEL), 209–242 (AQLLHNFGLLHAQSGKSEEAVSKLEEALQNDEYA), 244–284 (SAYY…EPNR), and 326–359 (RELSILAGERYRELELYKEAAHFFYEALQIEELI).

Belongs to the Rap family.

Its subcellular location is the cytoplasm. Its activity is regulated as follows. Inhibited by PhrG. Functionally, involved in the regulation of expression of DegU-controlled genes. Inhibits the binding of DegU to the promoter regions of aprE, coding for an extracellular alkaline protease, and comK, a master regulator for development of genetic competence. RapG does not stimulate dephosphorylation of DegU-P. The sequence is that of Regulatory protein RapG (rapG) from Bacillus subtilis (strain 168).